The chain runs to 248 residues: Biosynthetic peptidoglycan transglycosylase (248 aa).

Residues 17–37 (LLIFFFASTILAVIVYRFMPV) traverse the membrane as a helical segment.

The protein belongs to the glycosyltransferase 51 family.

Its subcellular location is the cell inner membrane. It catalyses the reaction [GlcNAc-(1-&gt;4)-Mur2Ac(oyl-L-Ala-gamma-D-Glu-L-Lys-D-Ala-D-Ala)](n)-di-trans,octa-cis-undecaprenyl diphosphate + beta-D-GlcNAc-(1-&gt;4)-Mur2Ac(oyl-L-Ala-gamma-D-Glu-L-Lys-D-Ala-D-Ala)-di-trans,octa-cis-undecaprenyl diphosphate = [GlcNAc-(1-&gt;4)-Mur2Ac(oyl-L-Ala-gamma-D-Glu-L-Lys-D-Ala-D-Ala)](n+1)-di-trans,octa-cis-undecaprenyl diphosphate + di-trans,octa-cis-undecaprenyl diphosphate + H(+). The protein operates within cell wall biogenesis; peptidoglycan biosynthesis. Peptidoglycan polymerase that catalyzes glycan chain elongation from lipid-linked precursors. This chain is Biosynthetic peptidoglycan transglycosylase, found in Bacteroides thetaiotaomicron (strain ATCC 29148 / DSM 2079 / JCM 5827 / CCUG 10774 / NCTC 10582 / VPI-5482 / E50).